We begin with the raw amino-acid sequence, 335 residues long: Hsp90 co-chaperone Cdc37-like 1 (335 aa).

Pro residues predominate over residues 1–11 (MEQPWPPPGPW). The disordered stretch occupies residues 1 to 42 (MEQPWPPPGPWSFPRTGGETEEESDLDVSPSSSHYSPVPDGG). The tract at residues 2–170 (EQPWPPPGPW…YEQKIRHFGM (169 aa)) is self-association. A compositionally biased stretch (low complexity) spans 27–40 (DVSPSSSHYSPVPD). Residues S32 and S88 each carry the phosphoserine modification. Residues 84–120 (HNSESLDQEHAKAQTAVSELRQREEEWRQKEEALVQR) adopt a coiled-coil conformation. The self-association and interaction with Hsp90 stretch occupies residues 147–276 (KTEEEDKSQS…SRVRLYAQSQ (130 aa)). An interaction with Hsp70 region spans residues 266–335 (KSRVRLYAQS…EDDDRMMDTV (70 aa)). The interval 277 to 335 (SLQPVTVQNHVPHSGVGCIGSLESLPQNPDSLQCCTPAPLCSVDSVVHKEDDDRMMDTV) is required for interaction with STIP1.

It belongs to the CDC37 family. As to quaternary structure, self-associates. Forms complexes with Hsp70 and Hsp90. Interacts with CDC37, FKBP4, PPID and STIP1.

The protein localises to the cytoplasm. In terms of biological role, co-chaperone that binds to numerous proteins and promotes their interaction with Hsp70 and Hsp90. This chain is Hsp90 co-chaperone Cdc37-like 1 (Cdc37l1), found in Mus musculus (Mouse).